Consider the following 276-residue polypeptide: Undecaprenyl-diphosphatase (276 aa).

The next 6 helical transmembrane spans lie at R43–F63, I85–I105, L109–A129, A184–G204, V218–L238, and I254–A274.

Belongs to the UppP family.

It is found in the cell inner membrane. The enzyme catalyses di-trans,octa-cis-undecaprenyl diphosphate + H2O = di-trans,octa-cis-undecaprenyl phosphate + phosphate + H(+). Catalyzes the dephosphorylation of undecaprenyl diphosphate (UPP). Confers resistance to bacitracin. The chain is Undecaprenyl-diphosphatase from Pseudomonas fluorescens (strain ATCC BAA-477 / NRRL B-23932 / Pf-5).